The primary structure comprises 262 residues: Phosphatidylglycerol--prolipoprotein diacylglyceryl transferase (262 aa).

4 helical membrane-spanning segments follow: residues 9–29, 41–61, 80–100, and 109–129; these read LGPL…ILAV, IIPD…ILGA, IFAI…GALV, and LINT…AQSL. R131 is a binding site for a 1,2-diacyl-sn-glycero-3-phospho-(1'-sn-glycerol). The next 3 membrane-spanning stretches (helical) occupy residues 167–187, 197–217, and 226–246; these read QPTF…ILIF, GHIT…IEGM, and GLRV…MIVI.

The protein belongs to the Lgt family.

It is found in the cell membrane. It carries out the reaction L-cysteinyl-[prolipoprotein] + a 1,2-diacyl-sn-glycero-3-phospho-(1'-sn-glycerol) = an S-1,2-diacyl-sn-glyceryl-L-cysteinyl-[prolipoprotein] + sn-glycerol 1-phosphate + H(+). It functions in the pathway protein modification; lipoprotein biosynthesis (diacylglyceryl transfer). Catalyzes the transfer of the diacylglyceryl group from phosphatidylglycerol to the sulfhydryl group of the N-terminal cysteine of a prolipoprotein, the first step in the formation of mature lipoproteins. The polypeptide is Phosphatidylglycerol--prolipoprotein diacylglyceryl transferase (Streptococcus pneumoniae (strain ATCC 700669 / Spain 23F-1)).